Here is a 390-residue protein sequence, read N- to C-terminus: Pyruvate dehydrogenase E1 component subunit alpha, somatic form, mitochondrial (390 aa).

The transit peptide at 1 to 29 (MRKMLAAVSRVLSGASQKPASRVLVASRN) directs the protein to the mitochondrion. K63 carries the post-translational modification N6-acetyllysine; alternate. N6-succinyllysine; alternate is present on K63. Pyruvate-binding residues include H92, Y118, R119, A157, G165, V167, D196, G197, A198, N225, and Y227. Residues Y118 and R119 each coordinate thiamine diphosphate. 6 residues coordinate thiamine diphosphate: G165, V167, D196, G197, A198, and N225. D196 serves as a coordination point for Mg(2+). Mg(2+) is bound by residues N225 and Y227. S232 is subject to Phosphoserine; by PDK1. K244 bears the N6-acetyllysine; alternate mark. K244 is modified (N6-succinyllysine; alternate). At K277 the chain carries N6-succinyllysine. H292 serves as a coordination point for thiamine diphosphate. A Phosphoserine; by PDK1, PDK2, PDK3 and PDK4 modification is found at S293. At S295 the chain carries Phosphoserine. A Phosphoserine; by PDK1, PDK2, PDK3 and PDK4 modification is found at S300. Y301 bears the Phosphotyrosine mark. The residue at position 313 (K313) is an N6-acetyllysine; alternate. The residue at position 313 (K313) is an N6-succinyllysine; alternate. N6-acetyllysine is present on residues K321 and K336. K385 is subject to N6-succinyllysine.

As to quaternary structure, heterotetramer of two PDHA1 and two PDHB subunits. The heterotetramer interacts with DLAT, and is part of the multimeric pyruvate dehydrogenase complex that contains multiple copies of pyruvate dehydrogenase (E1), dihydrolipoamide acetyltransferase (DLAT, E2) and lipoamide dehydrogenase (DLD, E3). These subunits are bound to an inner core composed of about 48 DLAT and 12 PDHX molecules. Thiamine diphosphate is required as a cofactor. The cofactor is Mg(2+). In terms of processing, phosphorylation at Ser-232, Ser-293 and Ser-300 by PDK family kinases inactivates the enzyme; for this phosphorylation at a single site is sufficient. Phosphorylation at Ser-293 interferes with access to active site, and thereby inactivates the enzyme. Dephosphorylation at all three sites, i.e. at Ser-232, Ser-293 and Ser-300, is required for reactivation. Post-translationally, acetylation alters the phosphorylation pattern. Deacetylated by SIRT3.

Its subcellular location is the mitochondrion matrix. The catalysed reaction is N(6)-[(R)-lipoyl]-L-lysyl-[protein] + pyruvate + H(+) = N(6)-[(R)-S(8)-acetyldihydrolipoyl]-L-lysyl-[protein] + CO2. Its activity is regulated as follows. Pyruvate dehydrogenase activity is inhibited by phosphorylation of PDHA1; it is reactivated by dephosphorylation. In terms of biological role, the pyruvate dehydrogenase complex catalyzes the overall conversion of pyruvate to acetyl-CoA and CO(2), and thereby links the glycolytic pathway to the tricarboxylic cycle. This chain is Pyruvate dehydrogenase E1 component subunit alpha, somatic form, mitochondrial (PDHA1), found in Pan troglodytes (Chimpanzee).